The following is a 421-amino-acid chain: ATP-dependent RNA helicase RhlB (421 aa).

The Q motif signature appears at 9–37 (QKFSDFALHPKVVEALEKKGFHNCTPIQA). The 180-residue stretch at 40 to 219 (LPLTLAGRDV…FEQMNNAEYI (180 aa)) folds into the Helicase ATP-binding domain. An ATP-binding site is contributed by 53–60 (AQTGTGKT). The DEAD box motif lies at 165 to 168 (DEAD). The Helicase C-terminal domain maps to 245–390 (RLLQTLIEEE…VSKYNPDALM (146 aa)). The disordered stretch occupies residues 392–421 (DLPKPLRLTRPRTGNGPRRTGAPRNRRRSG). Residues 402-414 (PRTGNGPRRTGAP) are compositionally biased toward low complexity.

The protein belongs to the DEAD box helicase family. RhlB subfamily. Component of the RNA degradosome, which is a multiprotein complex involved in RNA processing and mRNA degradation.

It is found in the cytoplasm. It catalyses the reaction ATP + H2O = ADP + phosphate + H(+). Its function is as follows. DEAD-box RNA helicase involved in RNA degradation. Has RNA-dependent ATPase activity and unwinds double-stranded RNA. This Escherichia coli O139:H28 (strain E24377A / ETEC) protein is ATP-dependent RNA helicase RhlB.